We begin with the raw amino-acid sequence, 143 residues long: Large-conductance mechanosensitive channel (143 aa).

2 consecutive transmembrane segments (helical) span residues 16–36 (VIDL…VTAL) and 84–104 (INTV…VKLI).

It belongs to the MscL family. In terms of assembly, homopentamer.

The protein localises to the cell inner membrane. Functionally, channel that opens in response to stretch forces in the membrane lipid bilayer. May participate in the regulation of osmotic pressure changes within the cell. In Xanthomonas axonopodis pv. citri (strain 306), this protein is Large-conductance mechanosensitive channel.